The sequence spans 79 residues: Sec-independent protein translocase protein TatA (79 aa).

A helical membrane pass occupies residues 1–21 (MGGISIWQLLIILVIVVLLFG). The disordered stretch occupies residues 45–79 (EEEKDADFEQKKQVEEKSAAEPVSTETQSDVKEKS). The segment covering 51 to 63 (DFEQKKQVEEKSA) has biased composition (basic and acidic residues).

The protein belongs to the TatA/E family. The Tat system comprises two distinct complexes: a TatABC complex, containing multiple copies of TatA, TatB and TatC subunits, and a separate TatA complex, containing only TatA subunits. Substrates initially bind to the TatABC complex, which probably triggers association of the separate TatA complex to form the active translocon.

It is found in the cell inner membrane. In terms of biological role, part of the twin-arginine translocation (Tat) system that transports large folded proteins containing a characteristic twin-arginine motif in their signal peptide across membranes. TatA could form the protein-conducting channel of the Tat system. The protein is Sec-independent protein translocase protein TatA of Alteromonas mediterranea (strain DSM 17117 / CIP 110805 / LMG 28347 / Deep ecotype).